Reading from the N-terminus, the 207-residue chain is Histone H1 (207 aa).

The segment covering 1 to 15 (MAEVAPAPAAAAPAK) has biased composition (low complexity). Disordered regions lie at residues 1-28 (MAEV…PKKA) and 105-207 (EAKK…PKKK). Position 2 is an N-acetylalanine (Ala2). Over residues 16–27 (APKKKAAAKPKK) the composition is skewed to basic residues. Residues 28–101 (AGPSVGELIV…GASGSFKLNK (74 aa)) enclose the H15 domain. Basic residues-rich tracts occupy residues 117–168 (KAKK…KVKK) and 175–207 (KAAK…PKKK).

Belongs to the histone H1/H5 family. In terms of tissue distribution, oncorhyncin II is expressed in skin.

It is found in the nucleus. The protein resides in the chromosome. The protein localises to the secreted. Functionally, histones H1 are necessary for the condensation of nucleosome chains into higher-order structures. In terms of biological role, oncorhyncin II has antibacterial activity against Gram-positive and Gram-negative bacteria at submicromolar concentrations. Potentially important role in mucosal defense. The protein is Histone H1 of Oncorhynchus mykiss (Rainbow trout).